The primary structure comprises 856 residues: Phosphoenolpyruvate synthase (856 aa).

His433 serves as the catalytic Tele-phosphohistidine intermediate. 7 residues coordinate substrate: Arg523, Arg636, Glu738, Gly759, Ser760, Asn761, and Asp762. Mg(2+) is bound at residue Glu738. A Mg(2+)-binding site is contributed by Asp762. Cys809 (proton donor) is an active-site residue.

Belongs to the PEP-utilizing enzyme family. The cofactor is Mg(2+).

The catalysed reaction is pyruvate + ATP + H2O = phosphoenolpyruvate + AMP + phosphate + 2 H(+). Its pathway is carbohydrate biosynthesis; gluconeogenesis. Functionally, catalyzes the phosphorylation of pyruvate to phosphoenolpyruvate. The polypeptide is Phosphoenolpyruvate synthase (ppsA) (Aquifex aeolicus (strain VF5)).